Reading from the N-terminus, the 918-residue chain is DNA repair and recombination protein RAD54B (918 aa).

Over residues 1 to 11 (MRRSAAPSQVL) the composition is skewed to polar residues. The disordered stretch occupies residues 1-29 (MRRSAAPSQVLGNVAKKPRFIPPGKSNAL). The 168-residue stretch at 320 to 487 (GMRVSGRFGA…YALIEFVNPG (168 aa)) folds into the Helicase ATP-binding domain. 333–340 (DEMGLGKT) is a binding site for ATP. Positions 438–441 (DEGH) match the DEGH box motif. The 165-residue stretch at 653-817 (VLVKLLAAIR…HIHFSVEELR (165 aa)) folds into the Helicase C-terminal domain. The segment at 842–873 (KDHQNPSSKKPSVSRCCQLRQDQGKHNSKKPL) is disordered.

This sequence belongs to the SNF2/RAD54 helicase family.

It localises to the nucleus. Its function is as follows. Involved in DNA repair and mitotic recombination. This chain is DNA repair and recombination protein RAD54B (RAD54B), found in Gallus gallus (Chicken).